Consider the following 132-residue polypeptide: uncharacterized protein (132 aa).

The chain crosses the membrane as a helical span at residues 66 to 86; sequence LPPMLLVLAALFVKGLIPLVL.

It is found in the membrane. This is an uncharacterized protein from Saccharomyces cerevisiae (strain ATCC 204508 / S288c) (Baker's yeast).